A 488-amino-acid chain; its full sequence is Protein DETOXIFICATION 35 (488 aa).

The next 12 helical transmembrane spans lie at 38 to 58 (LWMI…VSSV), 73 to 93 (AVSI…LGMG), 121 to 141 (IILF…TPVL), 150 to 170 (IAVP…SLAF), 187 to 207 (IAWI…LFII), 218 to 238 (LAFN…VIGW), 262 to 282 (IASA…IVLT), 296 to 316 (SICM…NAAI), 336 to 356 (VYVT…AIII), 379 to 401 (AYLL…VAVG), 408 to 428 (VAYI…YLLG), and 439 to 459 (WSGM…VLYK).

This sequence belongs to the multi antimicrobial extrusion (MATE) (TC 2.A.66.1) family. Highly expressed in inflorescence tissues, especially in floral epidermal guard cells including those of the anthers, stigma, siliques and nectaries. Also detected in the meristematic zone of the root apex and in the elongation zone through to the fully expanded cells of the differentiation zone.

The protein resides in the vacuole membrane. Functionally, multidrug and toxin efflux transporter involved in flavonoid metabolism. Required for proper reproductive development. The protein is Protein DETOXIFICATION 35 of Arabidopsis thaliana (Mouse-ear cress).